Reading from the N-terminus, the 1826-residue chain is 1,3-beta-glucan synthase component bgs3 (1826 aa).

Residues 34 to 43 (QSNDQYNNIQ) show a composition bias toward polar residues. A disordered region spans residues 34-90 (QSNDQYNNIQHPAPSFANPFIHEQDDSYSDILEEEPDEDAYDSPERPSSTEEFISQD). A compositionally biased stretch (acidic residues) spans 59–75 (DSYSDILEEEPDEDAYD). 7 helical membrane-spanning segments follow: residues 427-447 (IWIL…PTIY), 465-485 (WCAP…ALIL), 504-524 (LIFV…IFGF), 543-563 (FFFS…FLLG), 597-617 (AALW…FLTL), 637-657 (FMIG…LVYL), and 660-680 (LVLF…MFSI). Serine 885 bears the Phosphoserine mark. The next 11 membrane-spanning stretches (helical) occupy residues 1272-1292 (VFIM…GAMY), 1329-1349 (IISI…HDLL), 1375-1397 (VTQN…YIAT), 1417-1437 (GSSI…TMTV), 1438-1458 (WTTH…CPFI), 1531-1551 (IFTE…AYTF), 1571-1591 (IWIM…ILLM), 1607-1627 (YGAV…VFTF), 1642-1662 (VLGC…VVVF), 1701-1721 (CKVV…CILF), and 1770-1790 (SLLF…PLVL).

Belongs to the glycosyltransferase 48 family. As to quaternary structure, component of the 1,3-beta-glucan synthase (GS) complex, composed of at least the alternate catalytic subunits bgs1, bgs2, bgs3, and bgs4, and a regulatory subunit chr4.

Its subcellular location is the membrane. It carries out the reaction [(1-&gt;3)-beta-D-glucosyl](n) + UDP-alpha-D-glucose = [(1-&gt;3)-beta-D-glucosyl](n+1) + UDP + H(+). Functionally, alternate catalytic subunit of the 1,3-beta-glucan synthase (GS) complex. Synthesizes 1,3-beta-glucan, a major structural component of the yeast cell wall. Required for cell wall biosynthesis and cell elongation. The protein is 1,3-beta-glucan synthase component bgs3 of Schizosaccharomyces pombe (strain 972 / ATCC 24843) (Fission yeast).